The chain runs to 235 residues: Aspartate/glutamate leucyltransferase (235 aa).

This sequence belongs to the R-transferase family. Bpt subfamily.

It localises to the cytoplasm. The catalysed reaction is N-terminal L-glutamyl-[protein] + L-leucyl-tRNA(Leu) = N-terminal L-leucyl-L-glutamyl-[protein] + tRNA(Leu) + H(+). It carries out the reaction N-terminal L-aspartyl-[protein] + L-leucyl-tRNA(Leu) = N-terminal L-leucyl-L-aspartyl-[protein] + tRNA(Leu) + H(+). Functionally, functions in the N-end rule pathway of protein degradation where it conjugates Leu from its aminoacyl-tRNA to the N-termini of proteins containing an N-terminal aspartate or glutamate. This chain is Aspartate/glutamate leucyltransferase, found in Pseudomonas aeruginosa (strain LESB58).